Reading from the N-terminus, the 361-residue chain is tRNA-specific 2-thiouridylase MnmA (361 aa).

Residues glycine 9–serine 16 and methionine 35 contribute to the ATP site. Residues asparagine 95–aspartate 97 form an interaction with target base in tRNA region. Cysteine 100 serves as the catalytic Nucleophile. Cysteine 100 and cysteine 196 are disulfide-bonded. Residue glycine 124 coordinates ATP. The interval lysine 146–glutamine 148 is interaction with tRNA. Cysteine 196 serves as the catalytic Cysteine persulfide intermediate. The interval arginine 308–tyrosine 309 is interaction with tRNA.

It belongs to the MnmA/TRMU family.

The protein localises to the cytoplasm. The catalysed reaction is S-sulfanyl-L-cysteinyl-[protein] + uridine(34) in tRNA + AH2 + ATP = 2-thiouridine(34) in tRNA + L-cysteinyl-[protein] + A + AMP + diphosphate + H(+). Functionally, catalyzes the 2-thiolation of uridine at the wobble position (U34) of tRNA, leading to the formation of s(2)U34. This chain is tRNA-specific 2-thiouridylase MnmA, found in Nitrosomonas eutropha (strain DSM 101675 / C91 / Nm57).